Reading from the N-terminus, the 557-residue chain is Copine-4 (557 aa).

C2 domains lie at 3–131 (KMSN…SKSL) and 137–264 (TAGK…VQWE). Ca(2+)-binding residues include Asp-170, Asp-176, Asp-232, Asp-234, and Asp-240. In terms of domain architecture, VWFA spans 305–507 (QIQFTVAIDF…VLRDIVQFVP (203 aa)).

The protein belongs to the copine family. As to quaternary structure, interacts (via VWFA domain) with ACTB, BCOR, BICD2, CCDC22, CDC42BPB, CEP162, MYCBP2, NONO, PDCD6, PITPNM2, RDX, SKIL, SKT, SPTBN1, UBE2O and WTAP. The cofactor is Ca(2+).

Probable calcium-dependent phospholipid-binding protein that may play a role in calcium-mediated intracellular processes. This is Copine-4 from Mus musculus (Mouse).